We begin with the raw amino-acid sequence, 213 residues long: Type II restriction enzyme BamHI (213 aa).

Residues Glu77, Asp94, Glu111, and Phe112 each coordinate Mg(2+). Glu113 acts as the Proton acceptor in catalysis.

As to quaternary structure, homodimer. Mg(2+) is required as a cofactor.

It carries out the reaction Endonucleolytic cleavage of DNA to give specific double-stranded fragments with terminal 5'-phosphates.. In terms of biological role, a P subtype restriction enzyme that recognizes the double-stranded sequence 5'-GGATCC-3' and cleaves after G-1. This chain is Type II restriction enzyme BamHI, found in Bacillus amyloliquefaciens (Bacillus velezensis).